The sequence spans 142 residues: Large ribosomal subunit protein uL29 (142 aa).

It belongs to the universal ribosomal protein uL29 family.

This is Large ribosomal subunit protein uL29 (RPL35) from Theileria annulata.